A 345-amino-acid polypeptide reads, in one-letter code: uncharacterized protein (345 aa).

Helical transmembrane passes span 23 to 43 (VVGF…YSYV) and 56 to 76 (FLIA…FVAL). Positions 326–345 (VTEPTTNSKRKPVKAKKAKK) are disordered. Basic residues predominate over residues 333 to 345 (SKRKPVKAKKAKK).

Its subcellular location is the cell membrane. This is an uncharacterized protein from Mycoplasma pneumoniae (strain ATCC 29342 / M129 / Subtype 1) (Mycoplasmoides pneumoniae).